The sequence spans 132 residues: Small ribosomal subunit protein uS11 (132 aa).

Belongs to the universal ribosomal protein uS11 family. In terms of assembly, part of the 30S ribosomal subunit. Interacts with proteins S7 and S18. Binds to IF-3.

Functionally, located on the platform of the 30S subunit, it bridges several disparate RNA helices of the 16S rRNA. Forms part of the Shine-Dalgarno cleft in the 70S ribosome. This is Small ribosomal subunit protein uS11 from Chlamydia trachomatis serovar A (strain ATCC VR-571B / DSM 19440 / HAR-13).